Here is a 265-residue protein sequence, read N- to C-terminus: Gamma-secretase subunit APH-1A (265 aa).

Over 1-2 (MG) the chain is Lumenal. Residues 3–23 (AAVFFGCTFVAFGPAFSLFLI) traverse the membrane as a helical segment. Residues 24–31 (TVAGDPLR) are Cytoplasmic-facing. Residues 32-52 (VIILVAGAFFWLVSLLLASVV) traverse the membrane as a helical segment. The Lumenal segment spans residues 53-68 (WFILVHVTDRSDARLQ). The helical transmembrane segment at 69–89 (YGLLIFGAAVSVLLQEVFRFA) threads the bilayer. The Cytoplasmic segment spans residues 90–118 (YYKLLKKADEGLASLSEDGRSPISIRQMA). Residues 119-139 (YVSGLSFGIISGVFSVINILA) form a helical membrane-spanning segment. Residues 140 to 158 (DALGPGVVGIHGDSPYYFL) are Lumenal-facing. Residues 159–179 (TSAFLTAAIILLHTFWGVVFF) form a helical membrane-spanning segment. Residues 180–186 (DACERRR) are Cytoplasmic-facing. A helical transmembrane segment spans residues 187 to 207 (YWALGLVVGSHLLTSGLTFLN). The Lumenal portion of the chain corresponds to 208–213 (PWYEAS). Residues 214–234 (LLPIYAVTVSMGLWAFITAGG) form a helical membrane-spanning segment. At 235–265 (SLRSIQRSLSCRRQEDSRVMVYSALRIPPED) the chain is on the cytoplasmic side.

It belongs to the APH-1 family. In terms of assembly, the functional gamma-secretase complex is composed of at least four polypeptides: a presenilin homodimer (PSEN1 or PSEN2), nicastrin (NCSTN), APH1 (APH1A or APH1B) and PSENEN/PEN2.

It is found in the endoplasmic reticulum membrane. The protein localises to the golgi apparatus. It localises to the golgi stack membrane. Its function is as follows. Non-catalytic subunit of the gamma-secretase complex, an endoprotease complex that catalyzes the intramembrane cleavage of integral membrane proteins such as Notch receptors and APP (amyloid-beta precursor protein). Required for normal gamma-secretase assembly. The gamma-secretase complex plays a role in Notch and Wnt signaling cascades and regulation of downstream processes via its role in processing key regulatory proteins, and by regulating cytosolic CTNNB1 levels. The chain is Gamma-secretase subunit APH-1A (Aph1a) from Mus musculus (Mouse).